The following is a 484-amino-acid chain: Protein DETOXIFICATION 33 (484 aa).

Residues 1–16 (MGKDKTLPLLDPREPP) are compositionally biased toward basic and acidic residues. Residues 1–22 (MGKDKTLPLLDPREPPELTGTK) form a disordered region. Transmembrane regions (helical) follow at residues 39 to 59 (LWELAGPAIFTAISQYSLGAL), 81 to 101 (VISGLAFGVMLGMGSALETLC), 122 to 142 (VILFTTALFLLPVYIWAPPIL), 155 to 175 (AGKFALWMIPQLFAYAANFPI), 190 to 210 (WISGVVLVIHAVFSWLFILYF), 218 to 238 (AITLNTSWWLIVIGQLLYILI), 267 to 287 (ALMLCLEFWYLMVLVVVTGLL), 294 to 314 (VDAISICMNIEGWTAMISIGF), 338 to 358 (VIVVSITSTLIGIVCMIVVLA), 380 to 400 (IAVLLGFTVLLNSLQPVLSGV), 409 to 429 (LVAYVNIACYYIIGLPAGLVL), and 439 to 459 (GIWGGMVAGICLQTLILIGII).

It belongs to the multi antimicrobial extrusion (MATE) (TC 2.A.66.1) family.

The protein resides in the membrane. This chain is Protein DETOXIFICATION 33, found in Arabidopsis thaliana (Mouse-ear cress).